The primary structure comprises 330 residues: Phosphate acyltransferase (330 aa).

This sequence belongs to the PlsX family. As to quaternary structure, homodimer. Probably interacts with PlsY.

It localises to the cytoplasm. The catalysed reaction is a fatty acyl-[ACP] + phosphate = an acyl phosphate + holo-[ACP]. The protein operates within lipid metabolism; phospholipid metabolism. Its function is as follows. Catalyzes the reversible formation of acyl-phosphate (acyl-PO(4)) from acyl-[acyl-carrier-protein] (acyl-ACP). This enzyme utilizes acyl-ACP as fatty acyl donor, but not acyl-CoA. The protein is Phosphate acyltransferase of Bacillus anthracis (strain A0248).